The sequence spans 104 residues: Small ribosomal subunit protein uS10 (104 aa).

Belongs to the universal ribosomal protein uS10 family. In terms of assembly, part of the 30S ribosomal subunit.

In terms of biological role, involved in the binding of tRNA to the ribosomes. The sequence is that of Small ribosomal subunit protein uS10 from Gloeobacter violaceus (strain ATCC 29082 / PCC 7421).